A 122-amino-acid chain; its full sequence is MILNLDTNIFNHGLSRHNILAFSQGFPIGLPCRNWIEVGLRLRLRLLLELAVGNFPQGFKIHLSGSFQAVRLALFSSFTSLRTDELLLIETRPSYLSSVQGLKYYVIFIDNYSQGSVGCSRN.

It is found in the mitochondrion. This is an uncharacterized protein from Arabidopsis thaliana (Mouse-ear cress).